Consider the following 254-residue polypeptide: Aspartate/glutamate leucyltransferase (254 aa).

Belongs to the R-transferase family. Bpt subfamily.

Its subcellular location is the cytoplasm. The enzyme catalyses N-terminal L-glutamyl-[protein] + L-leucyl-tRNA(Leu) = N-terminal L-leucyl-L-glutamyl-[protein] + tRNA(Leu) + H(+). It catalyses the reaction N-terminal L-aspartyl-[protein] + L-leucyl-tRNA(Leu) = N-terminal L-leucyl-L-aspartyl-[protein] + tRNA(Leu) + H(+). Functions in the N-end rule pathway of protein degradation where it conjugates Leu from its aminoacyl-tRNA to the N-termini of proteins containing an N-terminal aspartate or glutamate. This chain is Aspartate/glutamate leucyltransferase, found in Xylella fastidiosa (strain M12).